The sequence spans 193 residues: Fra a 1-associated protein (193 aa).

The tract at residues 1–27 (MGWVWKDDDEQGGHVNPSAADISPRLD) is disordered.

In terms of assembly, interacts with FRAA1E, FRAA2 and FRAA3.

In Fragaria ananassa (Strawberry), this protein is Fra a 1-associated protein.